The following is a 339-amino-acid chain: Serpentine receptor class gamma-7 (339 aa).

The next 7 helical transmembrane spans lie at 30 to 50, 65 to 85, 98 to 118, 152 to 172, 200 to 220, 239 to 259, and 268 to 288; these read YWIQCLWLIPTLFLLVWIIIT, WILTADCVVSIILILLDLFVV, FSTIFINYPIISDIYFPIYNY, IPLFLTIICILPILVVWNTVI, LHLTFIFVSISFILISSLLLM, SIFIIVAFFFQAAFQSFYAFF, and FLVDFQFIIYDVMTVGYPLIF. The segment at 319-339 is disordered; it reads PFNNTMPRQESPSPNYDSILA.

Belongs to the nematode receptor-like protein srg family.

It localises to the membrane. This is Serpentine receptor class gamma-7 (srg-7) from Caenorhabditis elegans.